The chain runs to 285 residues: 4-hydroxybenzoate octaprenyltransferase (285 aa).

7 consecutive transmembrane segments (helical) span residues 20–39 (GSYL…AQGL), 92–112 (ALGL…ALNW), 137–157 (FPQV…FMAV), 159–179 (EAVP…TVAY), 206–226 (YDRL…LGMG), 228–248 (YLGF…LFIH), and 260–280 (ACFS…LGIA).

Belongs to the UbiA prenyltransferase family. It depends on Mg(2+) as a cofactor.

Its subcellular location is the cell inner membrane. It carries out the reaction all-trans-octaprenyl diphosphate + 4-hydroxybenzoate = 4-hydroxy-3-(all-trans-octaprenyl)benzoate + diphosphate. It functions in the pathway cofactor biosynthesis; ubiquinone biosynthesis. Its function is as follows. Catalyzes the prenylation of para-hydroxybenzoate (PHB) with an all-trans polyprenyl group. Mediates the second step in the final reaction sequence of ubiquinone-8 (UQ-8) biosynthesis, which is the condensation of the polyisoprenoid side chain with PHB, generating the first membrane-bound Q intermediate 3-octaprenyl-4-hydroxybenzoate. This chain is 4-hydroxybenzoate octaprenyltransferase, found in Pseudoalteromonas atlantica (strain T6c / ATCC BAA-1087).